The primary structure comprises 237 residues: Class B acid phosphatase (237 aa).

Positions methionine 1–alanine 25 are cleaved as a signal peptide. The active-site Nucleophile is aspartate 69. Residues aspartate 69 and aspartate 71 each coordinate Mg(2+). Aspartate 71 (proton donor) is an active-site residue. Substrate-binding positions include threonine 137–glycine 138 and lysine 177. Aspartate 192 provides a ligand contact to Mg(2+).

This sequence belongs to the class B bacterial acid phosphatase family. As to quaternary structure, homotetramer. The cofactor is Mg(2+).

Its subcellular location is the periplasm. The enzyme catalyses a phosphate monoester + H2O = an alcohol + phosphate. Dephosphorylates several organic phosphate monoesters. Also has a phosphotransferase activity catalyzing the transfer of low-energy phosphate groups from organic phosphate monoesters to free hydroxyl groups of various organic compounds. The polypeptide is Class B acid phosphatase (Citrobacter rodentium (strain ICC168) (Citrobacter freundii biotype 4280)).